The sequence spans 177 residues: Large ribosomal subunit protein uL6 (177 aa).

It belongs to the universal ribosomal protein uL6 family. Part of the 50S ribosomal subunit.

Functionally, this protein binds to the 23S rRNA, and is important in its secondary structure. It is located near the subunit interface in the base of the L7/L12 stalk, and near the tRNA binding site of the peptidyltransferase center. This Rickettsia massiliae (strain Mtu5) protein is Large ribosomal subunit protein uL6.